The primary structure comprises 200 residues: LHFPL tetraspan subfamily member 6 protein (200 aa).

An N-terminal signal peptide occupies residues 1 to 21 (MASSLTCAGVIWALLSFLCAA). The next 2 helical transmembrane spans lie at 84-104 (ICTV…LTAI) and 123-143 (GIQF…PLGW). N-linked (GlcNAc...) asparagine glycosylation is present at Asn154. The helical transmembrane segment at 172–192 (CTGAGAAAAMVLCTWMACFAG) threads the bilayer.

It belongs to the LHFP family.

Its subcellular location is the membrane. The sequence is that of LHFPL tetraspan subfamily member 6 protein from Danio rerio (Zebrafish).